Consider the following 235-residue polypeptide: Leucyl/phenylalanyl-tRNA--protein transferase (235 aa).

This sequence belongs to the L/F-transferase family.

It is found in the cytoplasm. The catalysed reaction is N-terminal L-lysyl-[protein] + L-leucyl-tRNA(Leu) = N-terminal L-leucyl-L-lysyl-[protein] + tRNA(Leu) + H(+). It catalyses the reaction N-terminal L-arginyl-[protein] + L-leucyl-tRNA(Leu) = N-terminal L-leucyl-L-arginyl-[protein] + tRNA(Leu) + H(+). It carries out the reaction L-phenylalanyl-tRNA(Phe) + an N-terminal L-alpha-aminoacyl-[protein] = an N-terminal L-phenylalanyl-L-alpha-aminoacyl-[protein] + tRNA(Phe). Functionally, functions in the N-end rule pathway of protein degradation where it conjugates Leu, Phe and, less efficiently, Met from aminoacyl-tRNAs to the N-termini of proteins containing an N-terminal arginine or lysine. The chain is Leucyl/phenylalanyl-tRNA--protein transferase from Aeromonas hydrophila subsp. hydrophila (strain ATCC 7966 / DSM 30187 / BCRC 13018 / CCUG 14551 / JCM 1027 / KCTC 2358 / NCIMB 9240 / NCTC 8049).